Reading from the N-terminus, the 159-residue chain is MNITIICVGKLKEKYLKLAIDEYSKRLSRYCKLNIVELNDEKTPDNASEKDELIIKQKEGSKILAHVKENMYVIALDLNGKMASSEELAELIGDLGLKGKSNIALVIGGSLGLSKEVLNRANYKLSFSKMTFPHQLMRVILLEQIYRAYKINAGEPYHK.

S-adenosyl-L-methionine is bound by residues leucine 76, glycine 108, and 127-132; that span reads FSKMTF.

The protein belongs to the RNA methyltransferase RlmH family. As to quaternary structure, homodimer.

The protein resides in the cytoplasm. The enzyme catalyses pseudouridine(1915) in 23S rRNA + S-adenosyl-L-methionine = N(3)-methylpseudouridine(1915) in 23S rRNA + S-adenosyl-L-homocysteine + H(+). In terms of biological role, specifically methylates the pseudouridine at position 1915 (m3Psi1915) in 23S rRNA. The chain is Ribosomal RNA large subunit methyltransferase H from Clostridium novyi (strain NT).